A 153-amino-acid polypeptide reads, in one-letter code: Deoxyuridine 5'-triphosphate nucleotidohydrolase (153 aa).

Substrate is bound by residues 65–67, N78, and 82–84; these read RSG and TID. The disordered stretch occupies residues 132 to 153; sequence MTQRGEGGFGHTGISAVHPRTH.

The protein belongs to the dUTPase family. It depends on Mg(2+) as a cofactor.

It carries out the reaction dUTP + H2O = dUMP + diphosphate + H(+). Its pathway is pyrimidine metabolism; dUMP biosynthesis; dUMP from dCTP (dUTP route): step 2/2. This enzyme is involved in nucleotide metabolism: it produces dUMP, the immediate precursor of thymidine nucleotides and it decreases the intracellular concentration of dUTP so that uracil cannot be incorporated into DNA. This chain is Deoxyuridine 5'-triphosphate nucleotidohydrolase, found in Chlorobium limicola (strain DSM 245 / NBRC 103803 / 6330).